The primary structure comprises 222 residues: Guanylate kinase (222 aa).

A Guanylate kinase-like domain is found at 19–197 (GFLFILSSPS…SVSLIKSIYL (179 aa)). 26–33 (SPSGAGKS) provides a ligand contact to ATP.

Belongs to the guanylate kinase family.

The protein resides in the cytoplasm. It carries out the reaction GMP + ATP = GDP + ADP. Essential for recycling GMP and indirectly, cGMP. This chain is Guanylate kinase, found in Bartonella henselae (strain ATCC 49882 / DSM 28221 / CCUG 30454 / Houston 1) (Rochalimaea henselae).